Consider the following 602-residue polypeptide: Isocitrate dehydrogenase kinase/phosphatase (602 aa).

ATP contacts are provided by residues Ala327–Met333 and Lys348. The active site involves Asp383.

This sequence belongs to the AceK family.

It localises to the cytoplasm. It carries out the reaction L-seryl-[isocitrate dehydrogenase] + ATP = O-phospho-L-seryl-[isocitrate dehydrogenase] + ADP + H(+). Functionally, bifunctional enzyme which can phosphorylate or dephosphorylate isocitrate dehydrogenase (IDH) on a specific serine residue. This is a regulatory mechanism which enables bacteria to bypass the Krebs cycle via the glyoxylate shunt in response to the source of carbon. When bacteria are grown on glucose, IDH is fully active and unphosphorylated, but when grown on acetate or ethanol, the activity of IDH declines drastically concomitant with its phosphorylation. The sequence is that of Isocitrate dehydrogenase kinase/phosphatase from Paraburkholderia phymatum (strain DSM 17167 / CIP 108236 / LMG 21445 / STM815) (Burkholderia phymatum).